The following is a 299-amino-acid chain: ATP synthase gamma chain (299 aa).

It belongs to the ATPase gamma chain family. As to quaternary structure, F-type ATPases have 2 components, CF(1) - the catalytic core - and CF(0) - the membrane proton channel. CF(1) has five subunits: alpha(3), beta(3), gamma(1), delta(1), epsilon(1). CF(0) has three main subunits: a, b and c.

It is found in the cell membrane. Its function is as follows. Produces ATP from ADP in the presence of a proton gradient across the membrane. The gamma chain is believed to be important in regulating ATPase activity and the flow of protons through the CF(0) complex. This Clavibacter michiganensis subsp. michiganensis (strain NCPPB 382) protein is ATP synthase gamma chain.